We begin with the raw amino-acid sequence, 112 residues long: TGEKPFICSDCGKCFNDSSILIRHMKIHTGEKPFCCPQCGRKFRRRAHLIVHERTHTGEKPFTCPECGKSFARRSHLMDHRIIHNGEKKYSCPECGKCFGLQGYLNKHFKIH.

4 consecutive C2H2-type zinc fingers follow at residues 6–28 (FICS…MKIH), 34–56 (FCCP…ERTH), 62–84 (FTCP…RIIH), and 90–112 (YSCP…FKIH).

Belongs to the krueppel C2H2-type zinc-finger protein family.

The protein resides in the nucleus. Its function is as follows. May be involved in transcriptional regulation. In Xenopus laevis (African clawed frog), this protein is Gastrula zinc finger protein XlCGF9.1.